The primary structure comprises 252 residues: Imidazole glycerol phosphate synthase subunit HisF (252 aa).

Residues Asp11 and Asp130 contribute to the active site.

The protein belongs to the HisA/HisF family. In terms of assembly, heterodimer of HisH and HisF.

The protein resides in the cytoplasm. The enzyme catalyses 5-[(5-phospho-1-deoxy-D-ribulos-1-ylimino)methylamino]-1-(5-phospho-beta-D-ribosyl)imidazole-4-carboxamide + L-glutamine = D-erythro-1-(imidazol-4-yl)glycerol 3-phosphate + 5-amino-1-(5-phospho-beta-D-ribosyl)imidazole-4-carboxamide + L-glutamate + H(+). It functions in the pathway amino-acid biosynthesis; L-histidine biosynthesis; L-histidine from 5-phospho-alpha-D-ribose 1-diphosphate: step 5/9. IGPS catalyzes the conversion of PRFAR and glutamine to IGP, AICAR and glutamate. The HisF subunit catalyzes the cyclization activity that produces IGP and AICAR from PRFAR using the ammonia provided by the HisH subunit. The polypeptide is Imidazole glycerol phosphate synthase subunit HisF (Hydrogenobaculum sp. (strain Y04AAS1)).